The chain runs to 1051 residues: Serine/threonine-protein kinase ULK1 (1051 aa).

In terms of domain architecture, Protein kinase spans 16–278 (FSRKDLIGHG…FDEFFHHPFL (263 aa)). ATP contacts are provided by residues 22-30 (IGHGAFAVV) and Lys-46. Asp-138 acts as the Proton acceptor in catalysis. Lys-162 is modified (N6-acetyllysine). Disordered regions lie at residues 283–323 (PIKK…EMPQ), 335–358 (AGFL…DDFV), and 394–554 (GLES…CRLH). Residues 287–416 (SPPVPVPSYP…TCSSSPSPSG (130 aa)) form an interaction with GABARAP and GABARAPL2 region. Composition is skewed to low complexity over residues 295–318 (YPSS…PPSL), 340–349 (GSRDSGGSSK), and 400–423 (RTPS…PFSS). Phosphoserine; by AMPK is present on Ser-317. A phosphoserine mark is found at Ser-403 and Ser-450. Polar residues predominate over residues 437 to 459 (QVHNYQRIEQNLQSPTQQQTARS). Position 456 is a phosphothreonine (Thr-456). Ser-467, Ser-477, Ser-479, and Ser-521 each carry phosphoserine. At Ser-555 the chain carries Phosphoserine; by AMPK. Phosphothreonine is present on Thr-574. Lys-606 carries the post-translational modification N6-acetyllysine. Thr-635 bears the Phosphothreonine mark. At Ser-637 the chain carries Phosphoserine; by AMPK. A Phosphoserine modification is found at Ser-638. Disordered stretches follow at residues 661–686 (PDLS…DTRG) and 727–787 (APSA…TGSS). Residues 731 to 745 (GFGGTLHPGARGGGA) are compositionally biased toward gly residues. Ser-757 carries the post-translational modification Phosphoserine; by MTOR. Ser-774 carries the phosphoserine modification. The segment covering 774 to 787 (SVGSSSSLGSTGSS) has biased composition (low complexity). Ser-777 is subject to Phosphoserine; by AMPK. Residues 829–1051 (PDLPEETLME…LSALLSGVYA (223 aa)) are C-terminal domain; mediates interaction with SESN2.

Belongs to the protein kinase superfamily. Ser/Thr protein kinase family. APG1/unc-51/ULK1 subfamily. As to quaternary structure, interacts with GABARAP and GABARAPL2. Interacts (via C-terminus) with ATG13. Part of a complex consisting of ATG13, ATG101, ULK1 and RB1CC1. Associates with the mammalian target of rapamycin complex 1 (mTORC1) through an interaction with RPTOR; the association depends on nutrient conditions and is reduced during starvation. Interacts with FEZ1; SCOC interferes with FEZ1-binding. Interacts with TBC1D14. Interacts (phosphorylated form) with TRIM5. When phosphorylated at Ser-317, interacts with MEFV and BECN1 simultaneously. Interacts with TRIM21 and IRF3, in the presence of TRIM21. Interacts with SESN2. Interacts with SQSTM1. Interacts with C9orf72. Interacts with WDR45. Interacts with ATG13; this interaction is increased in the absence of TMEM39A. Interacts with WIPI2. Interacts with ATP2A2. Interacts with AMBRA1. Interacts with Irgm1; promoting the coassembly of ULK1 and BECN1. In terms of processing, autophosphorylated. Phosphorylated under nutrient-rich conditions; dephosphorylated during starvation or following treatment with rapamycin. In response to nutrient limitation, phosphorylated and activated by AMPK, leading to activate autophagy. Under nutrient sufficiency, phosphorylated by MTOR/mTOR, disrupting the interaction with AMPK and preventing activation of ULK1. Post-translationally, ubiquitinated via 'Lys-63'-linkage by a complex composed of AMBRA1 and TRAF6 following autophagy induction, promoting ULK1 stability and kinase activity. Deubiquitinated by USP20; leading to ULK1 stability and autophagy initiation. Acetylated by KAT5/TIP60 under autophagy induction, promoting protein kinase activity.

Its subcellular location is the cytoplasm. The protein localises to the cytosol. It localises to the preautophagosomal structure. It catalyses the reaction L-seryl-[protein] + ATP = O-phospho-L-seryl-[protein] + ADP + H(+). It carries out the reaction L-threonyl-[protein] + ATP = O-phospho-L-threonyl-[protein] + ADP + H(+). Its activity is regulated as follows. Acetylation by KAT5/TIP60 stimulates the protein kinase activity. The protein kinase activity is activated by unanchored 'Lys-63'-linked polyubiquitin chains: unanchored 'Lys-63'-linked polyubiquitin chains are catalyzed by TRIM32 in an AMBRA1-dependent manner. In terms of biological role, serine/threonine-protein kinase involved in autophagy in response to starvation. Acts upstream of phosphatidylinositol 3-kinase PIK3C3 to regulate the formation of autophagophores, the precursors of autophagosomes. Part of regulatory feedback loops in autophagy: acts both as a downstream effector and negative regulator of mammalian target of rapamycin complex 1 (mTORC1) via interaction with RPTOR. Activated via phosphorylation by AMPK and also acts as a regulator of AMPK by mediating phosphorylation of AMPK subunits PRKAA1, PRKAB2 and PRKAG1, leading to negatively regulate AMPK activity. May phosphorylate ATG13/KIAA0652 and RPTOR; however such data need additional evidences. Plays a role early in neuronal differentiation and is required for granule cell axon formation. Also phosphorylates SESN2 and SQSTM1 to regulate autophagy. Phosphorylates FLCN, promoting autophagy. Phosphorylates AMBRA1 in response to autophagy induction, releasing AMBRA1 from the cytoskeletal docking site to induce autophagosome nucleation. Phosphorylates ATG4B, leading to inhibit autophagy by decreasing both proteolytic activation and delipidation activities of ATG4B. The sequence is that of Serine/threonine-protein kinase ULK1 (Ulk1) from Mus musculus (Mouse).